The primary structure comprises 228 residues: Cytochrome b-c1 complex subunit Rieske, mitochondrial (228 aa).

Residues 1-26 (MLAKQFISKSLASSLRRLLPVSSTAS) constitute a mitochondrion transit peptide. At 27–63 (SLKGSMMTIPKFTSIRTYTDSPEMPDFSEYQTKSTGD) the chain is on the mitochondrial matrix side. The helical transmembrane segment at 64 to 93 (RSRVISYAMVGTMGALTAAGAQATVHDFLA) threads the bilayer. Residues 94 to 228 (SWSASADVLA…TFEGSKIIIG (135 aa)) are Mitochondrial intermembrane-facing. The region spanning 139-227 (IQEANSVDIS…YTFEGSKIII (89 aa)) is the Rieske domain. [2Fe-2S] cluster contacts are provided by cysteine 172, histidine 174, cysteine 191, and histidine 194. Cysteines 177 and 193 form a disulfide.

This sequence belongs to the Rieske iron-sulfur protein family. Component of the ubiquinol-cytochrome c oxidoreductase (cytochrome b-c1 complex, complex III, CIII), a multisubunit enzyme composed of 3 respiratory subunits cytochrome b, cytochrome c1 and Rieske protein, 2 core protein subunits, and additional low-molecular weight protein subunits. The complex exists as an obligatory dimer and forms supercomplexes (SCs) in the inner mitochondrial membrane with cytochrome c oxidase (complex IV, CIV). [2Fe-2S] cluster serves as cofactor.

Its subcellular location is the mitochondrion inner membrane. It carries out the reaction a quinol + 2 Fe(III)-[cytochrome c](out) = a quinone + 2 Fe(II)-[cytochrome c](out) + 2 H(+)(out). In terms of biological role, component of the ubiquinol-cytochrome c oxidoreductase, a multisubunit transmembrane complex that is part of the mitochondrial electron transport chain which drives oxidative phosphorylation. The respiratory chain contains 3 multisubunit complexes succinate dehydrogenase (complex II, CII), ubiquinol-cytochrome c oxidoreductase (cytochrome b-c1 complex, complex III, CIII) and cytochrome c oxidase (complex IV, CIV), that cooperate to transfer electrons derived from NADH and succinate to molecular oxygen, creating an electrochemical gradient over the inner membrane that drives transmembrane transport and the ATP synthase. The cytochrome b-c1 complex catalyzes electron transfer from ubiquinol to cytochrome c, linking this redox reaction to translocation of protons across the mitochondrial inner membrane, with protons being carried across the membrane as hydrogens on the quinol. In the process called Q cycle, 2 protons are consumed from the matrix, 4 protons are released into the intermembrane space and 2 electrons are passed to cytochrome c. The Rieske protein is a catalytic core subunit containing a [2Fe-2S] iron-sulfur cluster. It cycles between 2 conformational states during catalysis to transfer electrons from the quinol bound in the Q(0) site in cytochrome b to cytochrome c1. The protein is Cytochrome b-c1 complex subunit Rieske, mitochondrial (rip1) of Schizosaccharomyces pombe (strain 972 / ATCC 24843) (Fission yeast).